A 213-amino-acid polypeptide reads, in one-letter code: Orotate phosphoribosyltransferase (213 aa).

A 5-phospho-alpha-D-ribose 1-diphosphate-binding site is contributed by lysine 26. Residue 34–35 (FF) participates in orotate binding. Residues 72 to 73 (YK), arginine 99, lysine 100, lysine 103, histidine 105, and 124 to 132 (DDVITAGTA) each bind 5-phospho-alpha-D-ribose 1-diphosphate. Threonine 128 and arginine 156 together coordinate orotate.

Belongs to the purine/pyrimidine phosphoribosyltransferase family. PyrE subfamily. In terms of assembly, homodimer. Mg(2+) is required as a cofactor.

The enzyme catalyses orotidine 5'-phosphate + diphosphate = orotate + 5-phospho-alpha-D-ribose 1-diphosphate. It participates in pyrimidine metabolism; UMP biosynthesis via de novo pathway; UMP from orotate: step 1/2. Functionally, catalyzes the transfer of a ribosyl phosphate group from 5-phosphoribose 1-diphosphate to orotate, leading to the formation of orotidine monophosphate (OMP). The sequence is that of Orotate phosphoribosyltransferase from Salmonella paratyphi A (strain ATCC 9150 / SARB42).